We begin with the raw amino-acid sequence, 82 residues long: Small ribosomal subunit protein bS18 (82 aa).

Positions 1–20 (MAEVSSSTVRRPFHRRRKTC) are disordered.

It belongs to the bacterial ribosomal protein bS18 family. Part of the 30S ribosomal subunit. Forms a tight heterodimer with protein bS6.

Functionally, binds as a heterodimer with protein bS6 to the central domain of the 16S rRNA, where it helps stabilize the platform of the 30S subunit. The polypeptide is Small ribosomal subunit protein bS18 (Allorhizobium ampelinum (strain ATCC BAA-846 / DSM 112012 / S4) (Agrobacterium vitis (strain S4))).